A 363-amino-acid chain; its full sequence is Cytochrome b (363 aa).

4 helical membrane-spanning segments follow: residues 24–44 (VGFSLGFFIALQIICGVCLAW), 68–90 (FVIRSVHICFTSLLYLLLYIHIF), 105–125 (VWFIGFILFVFIIIIAFIGYV), and 171–191 (LHVLHVLLPFILLIILILHLF). Residues H74 and H88 each coordinate heme b. Residues H175 and H189 each contribute to the heme b site. Residue H194 coordinates a ubiquinone. Helical transmembrane passes span 219–239 (FYLRDMFLAFSILLCMMYVIF), 287–307 (FLMVILLFSLFLFILNCILWF), 321–341 (LILFYSIWMSGFLALYVVLAY), and 342–362 (PIWMELQYWVLLLFLLIVCRL).

The protein belongs to the cytochrome b family. In terms of assembly, the main subunits of complex b-c1 are: cytochrome b, cytochrome c1 and the Rieske protein. Requires heme b as cofactor.

The protein localises to the mitochondrion inner membrane. Component of the ubiquinol-cytochrome c reductase complex (complex III or cytochrome b-c1 complex) that is part of the mitochondrial respiratory chain. The b-c1 complex mediates electron transfer from ubiquinol to cytochrome c. Contributes to the generation of a proton gradient across the mitochondrial membrane that is then used for ATP synthesis. This is Cytochrome b (MT-CYB) from Trypanosoma brucei brucei.